A 76-amino-acid chain; its full sequence is uncharacterized protein (76 aa).

The HTH cro/C1-type domain maps to 6–60; the sequence is LKKNRLEKGFTQEEVAKAAQIGRAYYTMIENGTRKPSVIVSKKIGEKLGFDWTIF. Positions 17-36 form a DNA-binding region, H-T-H motif; the sequence is QEEVAKAAQIGRAYYTMIEN.

This is an uncharacterized protein from Bacillus subtilis (strain 168).